A 296-amino-acid chain; its full sequence is Formamidopyrimidine-DNA glycosylase (296 aa).

The Schiff-base intermediate with DNA role is filled by Pro-2. The Proton donor role is filled by Glu-3. Lys-58 functions as the Proton donor; for beta-elimination activity in the catalytic mechanism. DNA contacts are provided by His-104, Arg-126, and Lys-169. The segment at 260–296 (SVYDREGQACGTPGCGGTVARIVQAGRSTFYCAACQK) adopts an FPG-type zinc-finger fold. The active-site Proton donor; for delta-elimination activity is Arg-286.

It belongs to the FPG family. Monomer. It depends on Zn(2+) as a cofactor.

The catalysed reaction is Hydrolysis of DNA containing ring-opened 7-methylguanine residues, releasing 2,6-diamino-4-hydroxy-5-(N-methyl)formamidopyrimidine.. It catalyses the reaction 2'-deoxyribonucleotide-(2'-deoxyribose 5'-phosphate)-2'-deoxyribonucleotide-DNA = a 3'-end 2'-deoxyribonucleotide-(2,3-dehydro-2,3-deoxyribose 5'-phosphate)-DNA + a 5'-end 5'-phospho-2'-deoxyribonucleoside-DNA + H(+). Its function is as follows. Involved in base excision repair of DNA damaged by oxidation or by mutagenic agents. Acts as a DNA glycosylase that recognizes and removes damaged bases. Has a preference for oxidized purines, such as 7,8-dihydro-8-oxoguanine (8-oxoG). Has AP (apurinic/apyrimidinic) lyase activity and introduces nicks in the DNA strand. Cleaves the DNA backbone by beta-delta elimination to generate a single-strand break at the site of the removed base with both 3'- and 5'-phosphates. This chain is Formamidopyrimidine-DNA glycosylase, found in Rhizobium etli (strain ATCC 51251 / DSM 11541 / JCM 21823 / NBRC 15573 / CFN 42).